Consider the following 411-residue polypeptide: UPF0597 protein Fnod_1278 (411 aa).

It belongs to the UPF0597 family.

The polypeptide is UPF0597 protein Fnod_1278 (Fervidobacterium nodosum (strain ATCC 35602 / DSM 5306 / Rt17-B1)).